Here is a 171-residue protein sequence, read N- to C-terminus: Putative phosphoesterase BH1439 (171 aa).

The active-site Proton donor is the His34. 2 consecutive short sequence motifs (HXTX) follow at residues 34–37 and 115–118; these read HVTL and HLTI. His115 serves as the catalytic Proton acceptor.

The protein belongs to the 2H phosphoesterase superfamily. YjcG family.

In Halalkalibacterium halodurans (strain ATCC BAA-125 / DSM 18197 / FERM 7344 / JCM 9153 / C-125) (Bacillus halodurans), this protein is Putative phosphoesterase BH1439.